The following is a 494-amino-acid chain: Tripartite motif-containing protein 5 (494 aa).

Position 2 is an N-acetylalanine (alanine 2). The segment at 15–59 (CPICLELLTEPLSLDCGHSFCQACITANHKESTLHQGERSCPLCR) adopts an RING-type zinc-finger fold. Position 86 is a phosphoserine (serine 86). The segment at 91-132 (QKVDLCARHGEKLLLFCQQDGNVICWLCERSQEHRGHHTFLV) adopts a B box-type zinc-finger fold. Zn(2+)-binding residues include cysteine 96, histidine 99, cysteine 118, and histidine 124. A coiled-coil region spans residues 140–223 (RENLQVVLEM…RLVQSENDMV (84 aa)). A required for interaction with GABARAP and for autophagy region spans residues 186 to 199 (FKQLRDILDCEESN). Residues 280-494 (PDLKGMLQVS…LPMTLCSPRS (215 aa)) form the B30.2/SPRY domain.

This sequence belongs to the TRIM/RBCC family. In terms of assembly, can form homodimers and homotrimers. In addition to lower-order dimerization, also exhibits a higher-order multimerization and both low- and high-order multimerizations are essential for its restriction activity. Interacts with BTBD1 and BTBD2. Interacts with PSMC4, PSMC5, PSMD7 and HSPA8/HSC70. Interacts (via B30.2/SPRY domain) with HSPA1A/B. Interacts with PSMC2, MAP3K7/TAK1, TAB2 and TAB3. Interacts with SQSTM1. Interacts with TRIM6 and TRIM34. Interacts with ULK1 (phosphorylated form), GABARAP, GABARAPL1, GABARAPL2, MAP1LC3A, MAP1LC3C and BECN1. Post-translationally, degraded in a proteasome-independent fashion in the absence of viral infection but in a proteasome-dependent fashion following exposure to restriction sensitive virus. Autoubiquitinated in a RING finger- and UBE2D2-dependent manner. Monoubiquitinated by TRIM21. Deubiquitinated by Yersinia YopJ. Ubiquitination may not lead to proteasomal degradation.

The protein localises to the cytoplasm. It localises to the nucleus. The catalysed reaction is S-ubiquitinyl-[E2 ubiquitin-conjugating enzyme]-L-cysteine + [acceptor protein]-L-lysine = [E2 ubiquitin-conjugating enzyme]-L-cysteine + N(6)-ubiquitinyl-[acceptor protein]-L-lysine.. Its pathway is protein modification; protein ubiquitination. Capsid-specific restriction factor that prevents infection from non-host-adapted retroviruses. Blocks viral replication early in the life cycle, after viral entry but before reverse transcription. In addition to acting as a capsid-specific restriction factor, also acts as a pattern recognition receptor that activates innate immune signaling in response to the retroviral capsid lattice. Binding to the viral capsid triggers its E3 ubiquitin ligase activity, and in concert with the heterodimeric ubiquitin conjugating enzyme complex UBE2V1-UBE2N (also known as UBC13-UEV1A complex) generates 'Lys-63'-linked polyubiquitin chains, which in turn are catalysts in the autophosphorylation of the MAP3K7/TAK1 complex (includes TAK1, TAB2, and TAB3). Activation of the MAP3K7/TAK1 complex by autophosphorylation results in the induction and expression of NF-kappa-B and MAPK-responsive inflammatory genes, thereby leading to an innate immune response in the infected cell. Plays a role in regulating autophagy through activation of autophagy regulator BECN1 by causing its dissociation from its inhibitors BCL2 and TAB2. The polypeptide is Tripartite motif-containing protein 5 (TRIM5) (Plecturocebus donacophilus (Bolivian gray titi monkey)).